A 418-amino-acid chain; its full sequence is UDP-N-acetylglucosamine 1-carboxyvinyltransferase (418 aa).

22-23 (KN) lines the phosphoenolpyruvate pocket. Residue R91 coordinates UDP-N-acetyl-alpha-D-glucosamine. The active-site Proton donor is C115. C115 bears the 2-(S-cysteinyl)pyruvic acid O-phosphothioketal mark. UDP-N-acetyl-alpha-D-glucosamine is bound by residues 120 to 124 (RPVDL), D305, and I327.

Belongs to the EPSP synthase family. MurA subfamily.

Its subcellular location is the cytoplasm. The catalysed reaction is phosphoenolpyruvate + UDP-N-acetyl-alpha-D-glucosamine = UDP-N-acetyl-3-O-(1-carboxyvinyl)-alpha-D-glucosamine + phosphate. Its pathway is cell wall biogenesis; peptidoglycan biosynthesis. Its function is as follows. Cell wall formation. Adds enolpyruvyl to UDP-N-acetylglucosamine. This Wigglesworthia glossinidia brevipalpis protein is UDP-N-acetylglucosamine 1-carboxyvinyltransferase.